We begin with the raw amino-acid sequence, 1485 residues long: Chromosome partition protein MukB (1485 aa).

Position 34-41 (34-41) interacts with ATP; it reads GGNGAGKS. 2 coiled-coil regions span residues 337-480 and 509-605; these read LNLV…QAYQ and QHLA…PVWL. Positions 666–783 are flexible hinge; sequence PSGAEDARLI…EVPLFGRAAR (118 aa). 2 coiled-coil regions span residues 835-915 and 977-1116; these read EAEI…IQQH and GMLT…AKAG.

The protein belongs to the SMC family. MukB subfamily. Homodimerization via its hinge domain. Binds to DNA via its C-terminal region. Interacts, and probably forms a ternary complex, with MukE and MukF via its C-terminal region. The complex formation is stimulated by calcium or magnesium. Interacts with tubulin-related protein FtsZ.

The protein localises to the cytoplasm. Its subcellular location is the nucleoid. Its function is as follows. Plays a central role in chromosome condensation, segregation and cell cycle progression. Functions as a homodimer, which is essential for chromosome partition. Involved in negative DNA supercoiling in vivo, and by this means organize and compact chromosomes. May achieve or facilitate chromosome segregation by condensation DNA from both sides of a centrally located replisome during cell division. This chain is Chromosome partition protein MukB, found in Yersinia pseudotuberculosis serotype O:3 (strain YPIII).